The sequence spans 302 residues: Cyclin-C (302 aa).

Positions Asn-46 to Glu-152 constitute a Cyclin N-terminal domain. The interval Leu-281 to Leu-302 is disordered. Positions Gln-292 to Leu-302 are enriched in low complexity.

It belongs to the cyclin family. Cyclin C subfamily. Component of the Mediator complex.

It localises to the nucleus. Its function is as follows. Component of the Mediator complex, a coactivator involved in regulated gene transcription of nearly all RNA polymerase II-dependent genes. Mediator functions as a bridge to convey information from gene-specific regulatory proteins to the basal RNA polymerase II transcription machinery. Mediator is recruited to promoters by direct interactions with regulatory proteins and serves as a scaffold for the assembly of a functional preinitiation complex with RNA polymerase II and the general transcription factors. Binds to and activates cyclin-dependent kinase cdk-8 that phosphorylates the CTD (C-terminal domain) of the large subunit of RNA polymerase II (RNAp II), which may inhibit the formation of a transcription initiation complex. This is Cyclin-C (cic-1) from Caenorhabditis elegans.